Here is a 284-residue protein sequence, read N- to C-terminus: MYKRCIGFIKLMRVHQPVGFFLLLWPTLWALWITNRGIPDFIVLSLFIVGVMCMRSAGCVINDYIDYDIDMCVQRTIRRPIVIGSVKKQEALWVFFILILIALIVVCVFNNIIAVFLSLIVLGLSIIYPYLKRYIYLPQLVLGIIFSWSILIVYTVMNCAVNKTTWLLFLANTIWVVLYDTEYAMVDRDDDKCIGIKSSALLFGKIDKIVIGILQLLTVFILYIIGIVEQLPIIFYLFSIVGASILFIWQQVLIFNRNREKCLWAFLSNSYVGMLIFVGIVLSF.

8 consecutive transmembrane segments (helical) span residues 14-34, 41-61, 93-113, 134-154, 166-186, 209-229, 233-253, and 262-282; these read VHQPVGFFLLLWPTLWALWIT, FIVLSLFIVGVMCMRSAGCVI, WVFFILILIALIVVCVFNNII, YIYLPQLVLGIIFSWSILIVY, WLLFLANTIWVVLYDTEYAMV, IVIGILQLLTVFILYIIGIVE, IIFYLFSIVGASILFIWQQVL, and CLWAFLSNSYVGMLIFVGIVL.

Belongs to the UbiA prenyltransferase family. Mg(2+) serves as cofactor.

It is found in the cell inner membrane. It catalyses the reaction all-trans-octaprenyl diphosphate + 4-hydroxybenzoate = 4-hydroxy-3-(all-trans-octaprenyl)benzoate + diphosphate. Its pathway is cofactor biosynthesis; ubiquinone biosynthesis. Functionally, catalyzes the prenylation of para-hydroxybenzoate (PHB) with an all-trans polyprenyl group. Mediates the second step in the final reaction sequence of ubiquinone-8 (UQ-8) biosynthesis, which is the condensation of the polyisoprenoid side chain with PHB, generating the first membrane-bound Q intermediate 3-octaprenyl-4-hydroxybenzoate. The protein is 4-hydroxybenzoate octaprenyltransferase of Blochmanniella floridana.